Reading from the N-terminus, the 248-residue chain is UPF0246 protein FN1762 (248 aa).

Belongs to the UPF0246 family.

In Fusobacterium nucleatum subsp. nucleatum (strain ATCC 25586 / DSM 15643 / BCRC 10681 / CIP 101130 / JCM 8532 / KCTC 2640 / LMG 13131 / VPI 4355), this protein is UPF0246 protein FN1762.